A 778-amino-acid polypeptide reads, in one-letter code: Kin of IRRE-like protein 3 (778 aa).

A signal peptide spans 1-21; that stretch reads MKPFQLDLLFVCFFLFSQELG. Over 22-535 the chain is Extracellular; that stretch reads LQKRGCCLVL…GLEAESVPMA (514 aa). Ig-like C2-type domains lie at 48-142, 147-243, 249-330, 335-415, and 419-515; these read YSFS…ARLT, PDDP…TSVT, PPLV…RTVD, PRMT…VTLT, and PPII…IRLK. An intrachain disulfide couples Cys69 to Cys127. Asn167 carries an N-linked (GlcNAc...) asparagine glycan. Cysteines 170 and 227 form a disulfide. Asn253 carries an N-linked (GlcNAc...) asparagine glycan. Cys271 and Cys314 are disulfide-bonded. Residue Asn324 is glycosylated (N-linked (GlcNAc...) asparagine). 2 disulfides stabilise this stretch: Cys356–Cys398 and Cys440–Cys499. N-linked (GlcNAc...) asparagine glycosylation is present at Asn498. Residues 536–556 form a helical membrane-spanning segment; that stretch reads VIIGVAVGAGVAFLVLMATIV. At 557 to 778 the chain is on the cytoplasmic side; sequence AFCCARSQRN…PLQRRMQTHV (222 aa). The segment covering 727–736 has biased composition (polar residues); sequence CDSSVSSSGK. A disordered region spans residues 727–778; the sequence is CDSSVSSSGKQDGYVQFDKASKASASSSHHSQSSSQNSDPSRPLQRRMQTHV. Positions 748–762 are enriched in low complexity; that stretch reads KASASSSHHSQSSSQ.

It belongs to the immunoglobulin superfamily. Homodimer; mediates homophilic interactions to promote cell adhesion. Interacts with NPHS1; forms heterodimers with NPHS1. Interacts with NPHS2/podocin (via the C-terminus). Interacts with CASK. Interacts (via extracellular region) with MAP1B. Interacts (via extracellular region) with MYO16. Interacts (via intracellular region) with ATP1B1. Interacts (via intracellular region) with SHMT2. Interacts (via intracellular region) with UFC1. Post-translationally, undergoes proteolysis by a metalloprotease and gives rise to a soluble form. In terms of tissue distribution, expressed in fetal and adult brain. Also expressed in kidney, specifically in podocytes of kidney glomeruli. Also expressed in skeletal muscle.

It is found in the cell membrane. The protein resides in the secreted. In terms of biological role, synaptic adhesion molecule required for the formation of target-specific synapses. Required for formation of target-specific synapses at hippocampal mossy fiber synapses. Required for formation of mossy fiber filopodia, the synaptic structures connecting dentate granule and GABA neurons. Probably acts as a homophilic adhesion molecule that promotes trans-cellular interactions and stabilize mossy fiber filipodia contact and subsequent synapse formation. Required for the coalescence of vomeronasal sensory neuron axons. May be involved in the hematopoietic supportive capacity of stroma cells; the secreted extracellular domain is directly responsible for supporting hematopoietic stem cells. This is Kin of IRRE-like protein 3 from Homo sapiens (Human).